A 442-amino-acid chain; its full sequence is Metacaspase-5 (442 aa).

A signal peptide spans 1–18 (MDLLLGVLSSGILQNALP). Residues 19 to 62 (FVAGVGRVKRPKRVKLEEAFREAHLCRPVIPYRAPTPYTGGRVK) are important for catalytic activity. Asn69 and Asn112 each carry an N-linked (GlcNAc...) asparagine glycan. Residue His146 is part of the active site. Ca(2+) is bound by residues Asp161, Asp177, and Asp178. Cys201 is an active-site residue. Asp208 serves as a coordination point for Ca(2+). 4 N-linked (GlcNAc...) asparagine glycosylation sites follow: Asn234, Asn257, Asn282, and Asn331. A negatively regulates catalytic activity region spans residues 336-442 (HYVPQQYLQP…QYLSGVGKPL (107 aa)). The segment covering 348 to 371 (PPQPYYPPPQPQQPYYPPPQPQQP) has biased composition (pro residues). Residues 348-442 (PPQPYYPPPQ…QYLSGVGKPL (95 aa)) are disordered. Residues 372–382 (YYPSSQLPTQY) are compositionally biased toward low complexity. A compositionally biased stretch (polar residues) spans 422 to 434 (PSDQSTYYSSAQY).

The protein belongs to the peptidase C14B family. In terms of processing, in epimastigotes, the unprocessed enzyme appears to be the main form. Auto-processing is dispensable for catalytic activity towards small oligopeptide substrates.

It is found in the recycling endosome. Its activity is regulated as follows. Activated by Ca(2+). Functionally, cysteine protease that cleaves specifically after arginine or lysine residues. May play a role in apoptosis. The polypeptide is Metacaspase-5 (Trypanosoma cruzi (strain CL Brener)).